Consider the following 167-residue polypeptide: Ureidoglycolate lyase (167 aa).

The protein belongs to the ureidoglycolate lyase family. In terms of assembly, homodimer. Requires Ni(2+) as cofactor.

The enzyme catalyses (S)-ureidoglycolate = urea + glyoxylate. It functions in the pathway nitrogen metabolism; (S)-allantoin degradation. Catalyzes the catabolism of the allantoin degradation intermediate (S)-ureidoglycolate, generating urea and glyoxylate. Involved in the utilization of allantoin as nitrogen source. This chain is Ureidoglycolate lyase, found in Pseudomonas fluorescens (strain Pf0-1).